Here is a 396-residue protein sequence, read N- to C-terminus: S-adenosylmethionine synthase (396 aa).

An ATP-binding site is contributed by histidine 16. Residue aspartate 18 participates in Mg(2+) binding. Residue glutamate 44 participates in K(+) binding. 2 residues coordinate L-methionine: glutamate 57 and glutamine 100. Residues 100–110 (QSVDIAQGVDR) are flexible loop. ATP contacts are provided by residues 165 to 167 (DAK), aspartate 240, 246 to 247 (RK), alanine 263, and lysine 267. An L-methionine-binding site is contributed by aspartate 240. Lysine 271 is a binding site for L-methionine.

Belongs to the AdoMet synthase family. As to quaternary structure, homotetramer; dimer of dimers. Mg(2+) serves as cofactor. Requires K(+) as cofactor.

It localises to the cytoplasm. It catalyses the reaction L-methionine + ATP + H2O = S-adenosyl-L-methionine + phosphate + diphosphate. It functions in the pathway amino-acid biosynthesis; S-adenosyl-L-methionine biosynthesis; S-adenosyl-L-methionine from L-methionine: step 1/1. In terms of biological role, catalyzes the formation of S-adenosylmethionine (AdoMet) from methionine and ATP. The overall synthetic reaction is composed of two sequential steps, AdoMet formation and the subsequent tripolyphosphate hydrolysis which occurs prior to release of AdoMet from the enzyme. The protein is S-adenosylmethionine synthase of Pseudomonas putida (strain ATCC 700007 / DSM 6899 / JCM 31910 / BCRC 17059 / LMG 24140 / F1).